The chain runs to 510 residues: Secreted RxLR effector protein 108 (510 aa).

The signal sequence occupies residues 1-20; the sequence is MRGAYYVLTALFVVTSSDIA. The N-linked (GlcNAc...) asparagine glycan is linked to Asn47. A RxLR-dEER motif is present at residues 48 to 65; sequence RSLRGSRDGRNDLANEER. Disordered regions lie at residues 111 to 139 and 386 to 442; these read RAAK…AKKT and KRSR…DDPK. A compositionally biased stretch (basic residues) spans 122–137; that stretch reads PAKAAKKTPRAAKAAK. Polar residues predominate over residues 393–405; that stretch reads DGNTDTASLPSKQ. A compositionally biased stretch (basic and acidic residues) spans 429–442; the sequence is VPTKEIKSSFDDPK.

It belongs to the RxLR effector family.

The protein resides in the secreted. It is found in the host nucleus. In terms of biological role, secreted effector that completely suppresses the host cell death induced by cell death-inducing proteins. In Plasmopara viticola (Downy mildew of grapevine), this protein is Secreted RxLR effector protein 108.